The primary structure comprises 283 residues: MTATIIDGKETAKEKREQLAKEVEELKAQGVVPGLAVILIGDDPASVSYVTGKKKAAETMGMKFKLDRFDSSLTEAELLTVIDQYNQNPEFHGILVQLPLPDHISEKAVIERISPDKDVDGFHPLNVGKMLLGEDTFLPCTPHGIVELLKKTNVDLSGKEVVVVGRSNIVGKPVGQLLLNENATVTYCHSRTKNMSEHTKKADILVVAVGKANFIKADQIKEGAIVIDVGVNRLESGKLCGDVQFDEAKEKASFITPVPGGVGPMTITMLAHNTVKSARRTLS.

Residues Gly-165–Ser-167, Ser-190, and Val-231 each bind NADP(+).

Belongs to the tetrahydrofolate dehydrogenase/cyclohydrolase family. Homodimer.

The enzyme catalyses (6R)-5,10-methylene-5,6,7,8-tetrahydrofolate + NADP(+) = (6R)-5,10-methenyltetrahydrofolate + NADPH. It carries out the reaction (6R)-5,10-methenyltetrahydrofolate + H2O = (6R)-10-formyltetrahydrofolate + H(+). The protein operates within one-carbon metabolism; tetrahydrofolate interconversion. In terms of biological role, catalyzes the oxidation of 5,10-methylenetetrahydrofolate to 5,10-methenyltetrahydrofolate and then the hydrolysis of 5,10-methenyltetrahydrofolate to 10-formyltetrahydrofolate. The polypeptide is Bifunctional protein FolD (Bacillus velezensis (strain DSM 23117 / BGSC 10A6 / LMG 26770 / FZB42) (Bacillus amyloliquefaciens subsp. plantarum)).